The sequence spans 1438 residues: DNA polymerase III PolC-type (1438 aa).

Positions 422–578 (YVVFDVETTG…YDTEATAYIF (157 aa)) constitute an Exonuclease domain.

It belongs to the DNA polymerase type-C family. PolC subfamily.

It localises to the cytoplasm. The enzyme catalyses DNA(n) + a 2'-deoxyribonucleoside 5'-triphosphate = DNA(n+1) + diphosphate. Its function is as follows. Required for replicative DNA synthesis. This DNA polymerase also exhibits 3' to 5' exonuclease activity. The chain is DNA polymerase III PolC-type from Staphylococcus aureus (strain MRSA252).